The chain runs to 467 residues: Cysteine--tRNA ligase (467 aa).

Cysteine 29 serves as a coordination point for Zn(2+). A 'HIGH' region motif is present at residues 31–41 (PTVYNYIHIGN). Residues cysteine 209, histidine 234, and glutamate 238 each contribute to the Zn(2+) site. A 'KMSKS' region motif is present at residues 266–270 (KMSKS). Lysine 269 provides a ligand contact to ATP. Serine 270 carries the post-translational modification Phosphoserine.

Belongs to the class-I aminoacyl-tRNA synthetase family. Monomer. Zn(2+) serves as cofactor.

It localises to the cytoplasm. The catalysed reaction is tRNA(Cys) + L-cysteine + ATP = L-cysteinyl-tRNA(Cys) + AMP + diphosphate. The protein is Cysteine--tRNA ligase of Bacillus licheniformis (strain ATCC 14580 / DSM 13 / JCM 2505 / CCUG 7422 / NBRC 12200 / NCIMB 9375 / NCTC 10341 / NRRL NRS-1264 / Gibson 46).